The primary structure comprises 626 residues: Transketolase-like protein 2 (626 aa).

His-37 provides a ligand contact to substrate. Thiamine diphosphate contacts are provided by residues Ser-40, His-77, and 123–125 (GSL). Asp-155 contacts Mg(2+). 2 residues coordinate thiamine diphosphate: Gly-156 and Asn-185. Residues Asn-185 and Leu-187 each coordinate Mg(2+). Lys-247 and His-261 together coordinate thiamine diphosphate. Substrate is bound by residues His-261 and Ser-348. Thiamine diphosphate is bound by residues Glu-369 and Phe-395. The Proton donor role is filled by Glu-369. Residues His-419 and Asp-427 each coordinate substrate. A thiamine diphosphate-binding site is contributed by Gln-431. Position 477 (Arg-477) interacts with substrate.

The protein belongs to the transketolase family. Homodimer. Mg(2+) serves as cofactor. Ca(2+) is required as a cofactor. It depends on Mn(2+) as a cofactor. The cofactor is Co(2+). Requires thiamine diphosphate as cofactor.

It catalyses the reaction D-sedoheptulose 7-phosphate + D-glyceraldehyde 3-phosphate = aldehydo-D-ribose 5-phosphate + D-xylulose 5-phosphate. In terms of biological role, plays an essential role in total transketolase activity and cell proliferation in cancer cells; after transfection with anti-TKTL1 siRNA, total transketolase activity dramatically decreases and proliferation was significantly inhibited in cancer cells. Plays a pivotal role in carcinogenesis. In Bos taurus (Bovine), this protein is Transketolase-like protein 2 (TKTL2).